The following is a 468-amino-acid chain: Neuronal acetylcholine receptor subunit alpha-5 (468 aa).

Positions 1-22 are cleaved as a signal peptide; the sequence is MAARGSGPRALRLLLLVQLVAG. Topologically, residues 23-254 are extracellular; that stretch reads RCGLAGAAGG…VIKRLPLFYT (232 aa). N-linked (GlcNAc...) asparagine glycans are attached at residues N155, N183, and N229. The cysteines at positions 170 and 184 are disulfide-linked. Residues C234 and C235 are joined by a disulfide bond. 3 helical membrane-spanning segments follow: residues 255 to 275, 282 to 302, and 317 to 337; these read LFLI…FYLP, ICLC…IEEI, and LVFT…AINI. Residues 338–429 lie on the Cytoplasmic side of the membrane; it reads HHRSSSTHNA…WKFIAQVLDR (92 aa). Residues 430–451 form a helical membrane-spanning segment; that stretch reads MFLWTFLFVSIVGSLGLFVPVI. Residues 452-468 are Extracellular-facing; the sequence is YKWANILIPVHIGNANK.

This sequence belongs to the ligand-gated ion channel (TC 1.A.9) family. Acetylcholine receptor (TC 1.A.9.1) subfamily. Alpha-5/CHRNA5 sub-subfamily. In terms of assembly, neuronal AChR that forms heteropentamers composed of two different type of subunits: alpha and non-alpha (beta). CHRNA5/alpha-5 subunit is only able to form functional nAChRs when co-assembled with another alpha subunit, can be combined to CHRNA4/alpha-4 or CHRNA3/alpha-3 and CHRNB4/beta-4 or CHRNB2/beta-2 to give rise to functional receptors. Interacts with LYPD6.

The protein resides in the synaptic cell membrane. It localises to the cell membrane. It catalyses the reaction Ca(2+)(in) = Ca(2+)(out). The enzyme catalyses K(+)(in) = K(+)(out). The catalysed reaction is Na(+)(in) = Na(+)(out). Activated by a myriad of ligands such as acetylcholine, cytisine, nicotine, choline and epibatidine. Functionally, component of neuronal acetylcholine receptors (nAChRs) that function as pentameric, ligand-gated cation channels with high calcium permeability among other activities. nAChRs are excitatory neurotrasnmitter receptors formed by a collection of nAChR subunits known to mediate synaptic transmission in the nervous system and the neuromuscular junction. Each nAchR subunit confers differential attributes to channel properties, including activation, deactivation and desensitization kinetics, pH sensitivity, cation permeability, and binding to allosteric modulators. Has an accessory rather than functional role and is only able to form functional nAChRs when co-assembled with another beta subunit. Participates in pentameric assemblies along with CHRNA3, CHRNA4, CHRNB2 and CHRNB4. Increases receptor sensitivity to acetylcholine and nicotine when associated with CHRNA4 and CHRNB2. Plays a role in nicotine addiction. This chain is Neuronal acetylcholine receptor subunit alpha-5, found in Homo sapiens (Human).